Reading from the N-terminus, the 229-residue chain is Potassium/proton antiporter CemA (229 aa).

The next 2 membrane-spanning stretches (helical) occupy residues 114 to 134 (IIYFIILSGYSILGNQELIIL) and 189 to 209 (IISGLVSTFPVILDTILKYWI).

The protein belongs to the CemA family.

It localises to the plastid. The protein localises to the chloroplast inner membrane. The catalysed reaction is K(+)(in) + H(+)(out) = K(+)(out) + H(+)(in). Its function is as follows. Contributes to K(+)/H(+) antiport activity by supporting proton efflux to control proton extrusion and homeostasis in chloroplasts in a light-dependent manner to modulate photosynthesis. Prevents excessive induction of non-photochemical quenching (NPQ) under continuous-light conditions. Indirectly promotes efficient inorganic carbon uptake into chloroplasts. The sequence is that of Potassium/proton antiporter CemA from Lotus japonicus (Lotus corniculatus var. japonicus).